A 352-amino-acid chain; its full sequence is Chorismate synthase (352 aa).

Arginine 48 contacts NADP(+). FMN is bound by residues 125 to 127 (RSS), 238 to 239 (NA), glycine 278, 293 to 297 (KPTSS), and arginine 319.

Belongs to the chorismate synthase family. In terms of assembly, homotetramer. The cofactor is FMNH2.

The catalysed reaction is 5-O-(1-carboxyvinyl)-3-phosphoshikimate = chorismate + phosphate. Its pathway is metabolic intermediate biosynthesis; chorismate biosynthesis; chorismate from D-erythrose 4-phosphate and phosphoenolpyruvate: step 7/7. Its function is as follows. Catalyzes the anti-1,4-elimination of the C-3 phosphate and the C-6 proR hydrogen from 5-enolpyruvylshikimate-3-phosphate (EPSP) to yield chorismate, which is the branch point compound that serves as the starting substrate for the three terminal pathways of aromatic amino acid biosynthesis. This reaction introduces a second double bond into the aromatic ring system. The sequence is that of Chorismate synthase from Legionella pneumophila (strain Lens).